We begin with the raw amino-acid sequence, 800 residues long: MTDSQALVPGPSPPHSKAEICYGATFFNISSYGIMEKYETPTVIFGYALPLLELQIILIFVCIVLSHMFLRRIGIPRFVSNILAGLILGPQLLDLLEYSSDRLSLDIPGNVALEGVARLGLVMFTFLMGVKTNKRAVYQIGKRPIVIAVSSFFVTMISGLAFRNFRLDKVDPLYMPLRLAPTERSVIVSIQAVTLLPVITHLVYELKMSNSELGRIAISTAAVSDFLGFLTLVCISYVGTYRYVSPGIANRDIVALIILVLVILFIFKPMAQRIVDMTPEGKPVPKVYLYVTILTAIAASIYLSVFNQMYILGALLVGLAIPDGPPLGSALEARFESLVTNIFFPISIAVMAMKADVVRALYSFDDISFNILLLGLTVVVKWTASFVPCLIFCELPTRESVIIATIMNYKGFVDLCFFDVALRRRNLSRATYTVMIIYVLLNAGILPTIIKALYDPKRKYIGYVKRDIMHLKTNSDLKILTCLHKPDNISGAISLLELLSSPLNNDNKDRGVIAVTALHLVKLAGRTFPILIPHDKRSKARLLQNSYIQTMMLAFTEFQQENWESTTVSSFTAYSHENLMDQDICNLALDHLTSMIIVPSGRKWSPDGEYESDDIMIRRVNESLLDLAPCSVGILNYRGYNKGKKKTNSIINVGVIFIGGKDDREALSLAKWMGQNSRVCLTVIRFLSGQELDKSKNWDYLVDDEVLNDLKATYSLANNFNYMEKVVNGGPAVATTVRLVAEDHDLMIVGRDHEDYSLDLTGLAQWMELPELGVIGDLLASKDLRARVSVLVVQQQQQHG.

12 helical membrane passes run 43–63 (VIFGYALPLLELQIILIFVCI), 73–93 (IGIPRFVSNILAGLILGPQLL), 110–130 (NVALEGVARLGLVMFTFLMGV), 145–165 (IVIAVSSFFVTMISGLAFRNF), 186–206 (VIVSIQAVTLLPVITHLVYEL), 216–236 (IAISTAAVSDFLGFLTLVCIS), 247–267 (GIANRDIVALIILVLVILFIF), 287–306 (VYLYVTILTAIAASIYLSVF), 338–358 (LVTNIFFPISIAVMAMKADVV), 371–391 (ILLLGLTVVVKWTASFVPCLI), 401–421 (VIIATIMNYKGFVDLCFFDVA), and 430–450 (ATYTVMIIYVLLNAGILPTII).

It belongs to the monovalent cation:proton antiporter 2 (CPA2) transporter (TC 2.A.37) family. CHX (TC 2.A.37.4) subfamily.

The protein resides in the membrane. In terms of biological role, may operate as a cation/H(+) antiporter. This chain is Cation/H(+) antiporter 9 (CHX9), found in Arabidopsis thaliana (Mouse-ear cress).